The chain runs to 394 residues: Chorismate synthase (394 aa).

Residues R42 and R48 each coordinate NADP(+). FMN is bound by residues 137 to 139 (RAS), 258 to 259 (QA), G302, 317 to 321 (KPIAT), and R343.

It belongs to the chorismate synthase family. In terms of assembly, homotetramer. It depends on FMNH2 as a cofactor.

The enzyme catalyses 5-O-(1-carboxyvinyl)-3-phosphoshikimate = chorismate + phosphate. It functions in the pathway metabolic intermediate biosynthesis; chorismate biosynthesis; chorismate from D-erythrose 4-phosphate and phosphoenolpyruvate: step 7/7. Functionally, catalyzes the anti-1,4-elimination of the C-3 phosphate and the C-6 proR hydrogen from 5-enolpyruvylshikimate-3-phosphate (EPSP) to yield chorismate, which is the branch point compound that serves as the starting substrate for the three terminal pathways of aromatic amino acid biosynthesis. This reaction introduces a second double bond into the aromatic ring system. This chain is Chorismate synthase, found in Streptomyces coelicolor (strain ATCC BAA-471 / A3(2) / M145).